We begin with the raw amino-acid sequence, 163 residues long: Small heat shock protein C1 (163 aa).

The 109-residue stretch at 55 to 163 folds into the sHSP domain; it reads MFYESSSIKS…EQDAKEITIN (109 aa).

It belongs to the small heat shock protein (HSP20) family.

The chain is Small heat shock protein C1 (hspC1) from Rickettsia typhi (strain ATCC VR-144 / Wilmington).